The following is a 41-amino-acid chain: Disintegrin obtustatin (41 aa).

4 cysteine pairs are disulfide-bonded: cysteine 1-cysteine 10, cysteine 6-cysteine 29, cysteine 7-cysteine 34, and cysteine 19-cysteine 36. The 41-residue stretch at 1 to 41 (CTTGPCCRQCKLKPAGTTCWKTSLTSHYCTGKSCDCPLYPG) folds into the Disintegrin domain. Positions 21-23 (KTS) match the Cell attachment site; atypical (KTS) motif.

The protein belongs to the disintegrin family. Short disintegrin subfamily. As to quaternary structure, monomer. As to expression, expressed by the venom gland.

It localises to the secreted. Functionally, is a potent and selective inhibitor of alpha-1/beta-1 (ITGA1/ITGB1) integrin. It blocks the adhesion of alpha-1/beta-1-expressing K562 cells to immobilized collagens IV and I with IC(50) of 2 and 0.5 nM, respectively. Potently inhibits angiogenesis in chicken and in mouse model and reduces tumor development by half. Is 25-fold less potent than viperistatin. The sequence is that of Disintegrin obtustatin from Macrovipera lebetina obtusa (Levant blunt-nosed viper).